The primary structure comprises 412 residues: uncharacterized protein (412 aa).

In terms of domain architecture, TRAM spans 6-64; that stretch reads ELAKGDIISVEVLRPAHGGEGIGHHDGRVIFVKGGIPGDVVDVEIAQLKKKWARGEVVK. S-adenosyl-L-methionine is bound by residues Q242, Y278, E300, and D341. C368 acts as the Nucleophile in catalysis.

It belongs to the class I-like SAM-binding methyltransferase superfamily. RNA M5U methyltransferase family.

This is an uncharacterized protein from Corynebacterium glutamicum (strain ATCC 13032 / DSM 20300 / JCM 1318 / BCRC 11384 / CCUG 27702 / LMG 3730 / NBRC 12168 / NCIMB 10025 / NRRL B-2784 / 534).